The following is a 155-amino-acid chain: 3-hydroxyacyl-[acyl-carrier-protein] dehydratase FabZ (155 aa).

His-58 is an active-site residue.

Belongs to the thioester dehydratase family. FabZ subfamily.

It is found in the cytoplasm. The catalysed reaction is a (3R)-hydroxyacyl-[ACP] = a (2E)-enoyl-[ACP] + H2O. Involved in unsaturated fatty acids biosynthesis. Catalyzes the dehydration of short chain beta-hydroxyacyl-ACPs and long chain saturated and unsaturated beta-hydroxyacyl-ACPs. This is 3-hydroxyacyl-[acyl-carrier-protein] dehydratase FabZ from Alkalilimnicola ehrlichii (strain ATCC BAA-1101 / DSM 17681 / MLHE-1).